The sequence spans 305 residues: LysM and putative peptidoglycan-binding domain-containing protein 3 (305 aa).

At M1–R221 the chain is on the extracellular side. N29 carries N-linked (GlcNAc...) asparagine glycosylation. Residues S31–D60 are disordered. Residues L68–I112 form the LysM domain. The span at T121–P144 shows a compositional bias: polar residues. Residues T121 to S156 are disordered. The segment covering S146–S156 has biased composition (low complexity). A helical transmembrane segment spans residues W222 to L242. Over Y243–T305 the chain is Cytoplasmic.

It is found in the cell membrane. The protein localises to the golgi apparatus. Its function is as follows. Essential for Golgi structural integrity. This Danio rerio (Zebrafish) protein is LysM and putative peptidoglycan-binding domain-containing protein 3 (lysmd3).